A 544-amino-acid polypeptide reads, in one-letter code: Chaperonin GroEL 1 (544 aa).

Residues 29–32 (TLGP), 86–90 (DGTTT), glycine 413, and aspartate 495 each bind ATP. Residues 525–544 (PEPKTNTPASSGSGMSDYDY) form a disordered region. Positions 528–538 (KTNTPASSGSG) are enriched in polar residues.

It belongs to the chaperonin (HSP60) family. In terms of assembly, forms a cylinder of 14 subunits composed of two heptameric rings stacked back-to-back. Interacts with the co-chaperonin GroES.

The protein resides in the cytoplasm. The enzyme catalyses ATP + H2O + a folded polypeptide = ADP + phosphate + an unfolded polypeptide.. Its function is as follows. Together with its co-chaperonin GroES, plays an essential role in assisting protein folding. The GroEL-GroES system forms a nano-cage that allows encapsulation of the non-native substrate proteins and provides a physical environment optimized to promote and accelerate protein folding. In Synechococcus sp. (strain JA-2-3B'a(2-13)) (Cyanobacteria bacterium Yellowstone B-Prime), this protein is Chaperonin GroEL 1.